Reading from the N-terminus, the 178-residue chain is Deoxycytidylate deaminase (178 aa).

A CMP/dCMP-type deaminase domain is found at 14–145 (EWPEYFMAVA…DEATAARLLF (132 aa)). Residue His84 participates in Zn(2+) binding. Glu86 (proton donor) is an active-site residue. Zn(2+) contacts are provided by Cys110 and Cys113. The residue at position 174 (Ser174) is a Phosphoserine.

This sequence belongs to the cytidine and deoxycytidylate deaminase family. As to quaternary structure, homohexamer. Zn(2+) serves as cofactor.

The enzyme catalyses dCMP + H2O + H(+) = dUMP + NH4(+). It carries out the reaction 5-hydroxymethyl-dCMP + H2O + H(+) = 5-hydroxymethyl-dUMP + NH4(+). With respect to regulation, allosteric enzyme whose activity is greatly influenced by the end products of its metabolic pathway, dCTP and dTTP. Catalyzes the deamination of dCMP to dUMP, providing the nucleoside monophosphate substrate for the thymidylate synthase/TYMS. Also, part of a nucleotide salvage pathway that eliminates epigenetically modified 5-hydroxymethyl-dCMP (hmdCMP) in a two-step process entailing deamination to cytotoxic 5-hydroxymethyl-dUMP (hmdUMP), followed by its hydrolysis into 5-hydroxymethyluracil (hmU) and 2-deoxy-D-ribose 5-phosphate (deoxyribosephosphate). Catalyzes the first step in that pathway, the deamination of 5-hydroxymethyl-dCMP (hmdCMP). The protein is Deoxycytidylate deaminase of Homo sapiens (Human).